A 586-amino-acid polypeptide reads, in one-letter code: Probable zinc metalloprotease EGY3, chloroplastic (586 aa).

A chloroplast-targeting transit peptide spans 1-54; sequence MASSSLVTSLLFSSSSSSNTATSTSSRRSFSLFSKNQYCKPRPLRRSSSRLLVR. Disordered stretches follow at residues 13–32 and 58–122; these read SSSSSSNTATSTSSRRSFSL and QQQQ…DWRS. The span at 61-73 shows a compositional bias: basic and acidic residues; that stretch reads QEEKAAPAAESHH. Positions 103–195 form a coiled coil; sequence VKKSKEELEE…NTFKALDLNK (93 aa). The next 7 membrane-spanning stretches (helical) occupy residues 287–307, 318–338, 389–409, 427–447, 454–474, 506–526, and 550–570; these read LSAVALAVTTFGTIAIMSGFF, VSDVLPLFAGFLSILGVSEIA, ASAYLTSVALAVSAFVSDGSL, PLLSFVQAVIGPYADELGNVL, VGVPVDPLAFAGLLGIVVTSL, VALGAGAIIGGSVLCLAWGLF, and YAWGLVLAVVCLLTLFPNGGG.

It belongs to the peptidase M50B family.

It localises to the plastid. The protein resides in the chloroplast membrane. Functionally, probable membrane-associated metalloprotease that may be involved in chloroplast development. In Oryza sativa subsp. japonica (Rice), this protein is Probable zinc metalloprotease EGY3, chloroplastic (EGY3).